The chain runs to 355 residues: Putative early 40.3 kDa protein (355 aa).

Its function is as follows. This protein is required for viral late gene expression. This Orgyia pseudotsugata multicapsid polyhedrosis virus (OpMNPV) protein is Putative early 40.3 kDa protein (DA41).